The primary structure comprises 287 residues: mRNA-capping enzyme small subunit (287 aa).

As to quaternary structure, heterodimer of a large and a small subunit.

Its subcellular location is the virion. The enzyme catalyses a 5'-end (5'-triphosphoguanosine)-ribonucleoside in mRNA + S-adenosyl-L-methionine = a 5'-end (N(7)-methyl 5'-triphosphoguanosine)-ribonucleoside in mRNA + S-adenosyl-L-homocysteine. Functionally, catalyzes the last reaction in the mRNA cap formation pathway. The polypeptide is mRNA-capping enzyme small subunit (Erythrocebus patas (Red guenon)).